The primary structure comprises 391 residues: Elongation factor Tu (391 aa).

Residues K10 to E201 enclose the tr-type G domain. Residues G19 to T26 are G1. Position 19–26 (G19–T26) interacts with GTP. T26 provides a ligand contact to Mg(2+). A G2 region spans residues G55–S59. Residues D76–G79 are G3. GTP-binding positions include D76–H80 and N131–D134. The interval N131 to D134 is G4. Residues S169–L171 form a G5 region.

It belongs to the TRAFAC class translation factor GTPase superfamily. Classic translation factor GTPase family. EF-Tu/EF-1A subfamily. Monomer.

The protein localises to the cytoplasm. It carries out the reaction GTP + H2O = GDP + phosphate + H(+). In terms of biological role, GTP hydrolase that promotes the GTP-dependent binding of aminoacyl-tRNA to the A-site of ribosomes during protein biosynthesis. The chain is Elongation factor Tu from Chelativorans sp. (strain BNC1).